We begin with the raw amino-acid sequence, 1226 residues long: Methionine synthase (1226 aa).

The Hcy-binding domain maps to 6 to 326; that stretch reads RAQIEAQLKQ…EHIRHMAMAV (321 aa). Residues C248, C311, and C312 each contribute to the Zn(2+) site. In terms of domain architecture, Pterin-binding spans 357-618; it reads FVNVGERTNV…VPEKLREAVE (262 aa). The B12-binding N-terminal domain maps to 651-745; the sequence is SALEWRTWSV…FINASKQAGS (95 aa). Residues E695, 757 to 761, H760, S805, T809, and A861 each bind methylcob(III)alamin; that span reads GDVHD. The region spanning 747-882 is the B12-binding domain; that stretch reads NGKILLATVK…SDELRPAFVE (136 aa). The AdoMet activation domain occupies 898–1226; the sequence is KKPRTKPVTL…EKWLGPNING (329 aa). S-adenosyl-L-methionine is bound by residues D948, R1136, and 1191–1192; that span reads YF.

This sequence belongs to the vitamin-B12 dependent methionine synthase family. It depends on methylcob(III)alamin as a cofactor. Zn(2+) serves as cofactor.

The enzyme catalyses (6S)-5-methyl-5,6,7,8-tetrahydrofolate + L-homocysteine = (6S)-5,6,7,8-tetrahydrofolate + L-methionine. The protein operates within amino-acid biosynthesis; L-methionine biosynthesis via de novo pathway; L-methionine from L-homocysteine (MetH route): step 1/1. Functionally, catalyzes the transfer of a methyl group from methyl-cobalamin to homocysteine, yielding enzyme-bound cob(I)alamin and methionine. Subsequently, remethylates the cofactor using methyltetrahydrofolate. The protein is Methionine synthase (metH) of Vibrio vulnificus (strain CMCP6).